The sequence spans 342 residues: Isopentenyl-diphosphate delta-isomerase (342 aa).

6-7 (RK) lines the substrate pocket. Residues serine 63, 64-66 (SMT), serine 94, and asparagine 122 each bind FMN. 94-96 (SMR) contacts substrate. Glutamine 157 serves as a coordination point for substrate. Position 158 (glutamate 158) interacts with Mg(2+). Residues lysine 189, threonine 219, 269-271 (GLK), and 290-291 (AG) each bind FMN.

It belongs to the IPP isomerase type 2 family. In terms of assembly, homooctamer. Dimer of tetramers. The cofactor is FMN. Requires NADPH as cofactor. It depends on Mg(2+) as a cofactor.

The protein resides in the cytoplasm. It catalyses the reaction isopentenyl diphosphate = dimethylallyl diphosphate. In terms of biological role, involved in the biosynthesis of isoprenoids. Catalyzes the 1,3-allylic rearrangement of the homoallylic substrate isopentenyl (IPP) to its allylic isomer, dimethylallyl diphosphate (DMAPP). This chain is Isopentenyl-diphosphate delta-isomerase, found in Rickettsia bellii (strain RML369-C).